The following is a 1993-amino-acid chain: Otoferlin (1993 aa).

Residues 1-98 (MALIVHLKTV…VEENRVEVSD (98 aa)) enclose the C2 1 domain. At 1–1959 (MALIVHLKTV…IKYLICTRYK (1959 aa)) the chain is on the cytoplasmic side. A disordered region spans residues 127–212 (PWDDGDFLGD…KEEPQRQDEP (86 aa)). Over residues 129 to 145 (DDGDFLGDESLQEEEKD) the composition is skewed to acidic residues. Basic and acidic residues-rich tracts occupy residues 163-186 (PGEK…EHKA) and 202-211 (HKEEPQRQDE). C2 domains lie at 251–372 (KRSK…HKWA) and 415–546 (IEGN…FLPT). A disordered region spans residues 654–708 (NYGNEVDGTSRPQRPRPRKEPGDEEEVDLIQNSSDDEGDEAGDLASVSSTPPMRP). A compositionally biased stretch (acidic residues) spans 675–695 (GDEEEVDLIQNSSDDEGDEAG). A coiled-coil region spans residues 807–836 (RERLKSCMRELESMGQQAKSLRAQVKRHTV). 2 consecutive C2 domains span residues 959-1084 (LHSF…PPRF) and 1131-1257 (RGPI…ANWN). The Ca(2+) site is built by aspartate 991, aspartate 997, aspartate 1053, aspartate 1055, and aspartate 1061. 2 disordered regions span residues 1294 to 1318 (AEDE…EEPD) and 1339 to 1398 (LRQH…EKKK). Over residues 1348–1357 (DLEEKEEMDS) the composition is skewed to acidic residues. A compositionally biased stretch (basic and acidic residues) spans 1366–1379 (KNKEKSRAAKEEKK). C2 domains lie at 1460-1589 (LPED…ATCG) and 1710-1861 (DMPA…KQCT). Ca(2+) contacts are provided by aspartate 1504, aspartate 1510, aspartate 1559, aspartate 1561, aspartate 1567, aspartate 1832, serine 1835, and aspartate 1838. A helical membrane pass occupies residues 1960–1980 (WLIIKIVLALLGLLMLALFLY). Residues 1981–1993 (SLPGYMVKKLLGA) lie on the Extracellular side of the membrane.

Belongs to the ferlin family. In terms of assembly, interacts with SNAP25; the interaction is direct. Interacts with STX1; the interaction is direct. Interacts with RAB8B. The cofactor is Ca(2+). As to expression, isoform 1 is expressed in the cochlea and brain. Expressed in cerebellum (Purkinje cells), hippocampus (granule cells of the dentate gyrus and in pyramidal cells of the CA1-CA3 region) and cortex (stellate and pyramidal cells). Expressed in hair cells of vestibular organs such as the saccule, utricle and crista ampullari. Expressed in the cochlear inner and outer cells (IHCs and OHCs) (at protein level). Expressed in brain: brainstem, cerebellum (granules cells and Purkinje cell layer), cortex (layers IV and V), inferior colliculus, superior colliculus and hippocampus (granule cells of the dentate gyrus and in pyramidal cells of the CA1-CA3 region).

Its subcellular location is the cytoplasmic vesicle. It is found in the secretory vesicle. The protein localises to the synaptic vesicle membrane. It localises to the basolateral cell membrane. The protein resides in the endoplasmic reticulum membrane. Its subcellular location is the golgi apparatus membrane. It is found in the presynaptic cell membrane. The protein localises to the cell membrane. In terms of biological role, key calcium ion sensor involved in the Ca(2+)-triggered synaptic vesicle-plasma membrane fusion and in the control of neurotransmitter release at these output synapses. Interacts in a calcium-dependent manner to the presynaptic SNARE proteins at ribbon synapses of cochlear inner hair cells (IHCs) to trigger exocytosis of neurotransmitter. Also essential to synaptic exocytosis in immature outer hair cells (OHCs). May also play a role within the recycling of endosomes. The chain is Otoferlin (Otof) from Rattus norvegicus (Rat).